Reading from the N-terminus, the 425-residue chain is Raffinose permease (425 aa).

Residues 1–11 (MNSASTHKNTD) are Cytoplasmic-facing. Residues 12 to 32 (FWIFGLFFFLYFFIMATCFPF) form a helical membrane-spanning segment. The Periplasmic segment spans residues 33 to 48 (LPVWLSDVVGLSKTDT). A helical transmembrane segment spans residues 49–69 (GIVFSCLSLFAISFQPLLGVI). Over 70–78 (SDRLGLKKN) the chain is Cytoplasmic. A helical membrane pass occupies residues 79-99 (LIWSISLLLVFFAPFFLYVFA). Over 100–105 (PLLHLN) the chain is Periplasmic. The helical transmembrane segment at 106 to 126 (IWAGALTGGVFIGFVFSAGAG) threads the bilayer. Residues 127 to 147 (AIEAYIERVSRSSGFEYGKAR) are Cytoplasmic-facing. A helical transmembrane segment spans residues 148–168 (MFGCLGWALCATMAGILFNVD). Residue Pro-169 is a topological domain, periplasmic. The helical transmembrane segment at 170–190 (SLVFWMGSGGALLLLLLLYLA) threads the bilayer. Over 191 to 229 (RPSTSQTAMVMNALGANSSLISTRMVFSLFRMRQMWMFV) the chain is Cytoplasmic. Residues 230–250 (LYTIGVACVYDVFDQQFAIFF) form a helical membrane-spanning segment. At 251 to 265 (RSFFDTPQAGIKAFG) the chain is on the periplasmic side. Residues 266–286 (FATTAGEICNAIIMFCTPWII) traverse the membrane as a helical segment. Over 287-294 (NRIGAKNT) the chain is Cytoplasmic. A helical membrane pass occupies residues 295-315 (LLVAGGIMTIRITGSAFATTM). A topological domain (periplasmic) is located at residue Thr-316. The chain crosses the membrane as a helical span at residues 317–337 (EVVILKMLHALEVPFLLVGAF). Residues 338-351 (KYITGVFDTRLSAT) are Cytoplasmic-facing. A helical transmembrane segment spans residues 352–372 (VYLIGFQFSKQLAAILLSTFA). Residues 373-383 (GHLYDRMGFQN) lie on the Periplasmic side of the membrane. Residues 384 to 404 (TYFVLGMIVLTVTVISAFTLS) form a helical membrane-spanning segment. Residues 405 to 425 (SSPGIVHPSVEKAPVAHSEIN) lie on the Cytoplasmic side of the membrane.

This sequence belongs to the major facilitator superfamily. Oligosaccharide:H(+) symporter (OHS) (TC 2.A.1.5) family. As to quaternary structure, monomer.

The protein resides in the cell inner membrane. Functionally, responsible for transport of raffinose into the cell. Can also transport lactose and melibiose. Has weak activity with maltose. The sequence is that of Raffinose permease from Escherichia coli.